We begin with the raw amino-acid sequence, 361 residues long: P2Y purinoceptor 4 (361 aa).

The disordered stretch occupies residues 1–20 (MTSAESLLFTSLGPSPSSGD). Residues 1 to 30 (MTSAESLLFTSLGPSPSSGDGDCRFNEEFK) lie on the Extracellular side of the membrane. The helical transmembrane segment at 31 to 58 (FILLPMSYAVVFVLGLALNAPTLWLFLF) threads the bilayer. Residues 59 to 68 (RLRPWDATAT) are Cytoplasmic-facing. The chain crosses the membrane as a helical span at residues 69–91 (YMFHLALSDTLYVLSLPTLVYYY). Residues 92-108 (AARNHWPFGTGLCKFVR) lie on the Extracellular side of the membrane. The cysteines at positions 104 and 181 are disulfide-linked. The helical transmembrane segment at 109–127 (FLFYWNLYCSVLFLTCISV) threads the bilayer. The Cytoplasmic portion of the chain corresponds to 128–149 (HRYLGICHPLRAIRWGRPRFAS). Residues 150 to 170 (LLCLGVWLVVAGCLVPNLFFV) form a helical membrane-spanning segment. Topologically, residues 171–192 (TTNANGTTILCHDTTLPEEFDH) are extracellular. An N-linked (GlcNAc...) asparagine glycan is attached at asparagine 175. The helical transmembrane segment at 193 to 218 (YVYFSSAVMVLLFGLPFLITLVCYGL) threads the bilayer. Over 219 to 242 (MARRLYRPLPGAGQSSSRLRSLRT) the chain is Cytoplasmic. A helical membrane pass occupies residues 243-265 (IAVVLTVFAVCFVPFHITRTIYY). Topologically, residues 266–283 (QARLLQADCHVLNIVNVV) are extracellular. The chain crosses the membrane as a helical span at residues 284–305 (YKVTRPLASANSCLDPVLYLFT). At 306 to 361 (GDKYRNQLQQLCRGSKPKPRTAASSLALVTLHEESISRWADTHQDSTFSAYEGDRL) the chain is on the cytoplasmic side.

Belongs to the G-protein coupled receptor 1 family. In terms of processing, phosphorylation of Ser-329 and Ser-330 is a key step in agonist-dependent desensitization and loss of surface P2RY4. This phosphorylation does not involve PKC, nor other calcium-activated kinases. In terms of tissue distribution, widely expressed at low levels. In brain, higher expression in the pineal gland and ventricular system.

The protein resides in the cell membrane. Functionally, receptor for ATP and UTP coupled to G-proteins that activate a phosphatidylinositol-calcium second messenger system. Not activated by ADP or UDP. The polypeptide is P2Y purinoceptor 4 (P2ry4) (Rattus norvegicus (Rat)).